The following is a 219-amino-acid chain: ATP-dependent Clp protease proteolytic subunit 1 (219 aa).

Residue serine 113 is the Nucleophile of the active site. Histidine 138 is an active-site residue.

This sequence belongs to the peptidase S14 family. As to quaternary structure, fourteen ClpP subunits assemble into 2 heptameric rings which stack back to back to give a disk-like structure with a central cavity, resembling the structure of eukaryotic proteasomes.

The protein localises to the cytoplasm. It catalyses the reaction Hydrolysis of proteins to small peptides in the presence of ATP and magnesium. alpha-casein is the usual test substrate. In the absence of ATP, only oligopeptides shorter than five residues are hydrolyzed (such as succinyl-Leu-Tyr-|-NHMec, and Leu-Tyr-Leu-|-Tyr-Trp, in which cleavage of the -Tyr-|-Leu- and -Tyr-|-Trp bonds also occurs).. Cleaves peptides in various proteins in a process that requires ATP hydrolysis. Has a chymotrypsin-like activity. Plays a major role in the degradation of misfolded proteins. Probably partially responsible for degradation of ECF sigma factor SigR prime. This chain is ATP-dependent Clp protease proteolytic subunit 1, found in Streptomyces coelicolor (strain ATCC BAA-471 / A3(2) / M145).